The following is an 88-amino-acid chain: UPF0297 protein LACR_0137 (88 aa).

It belongs to the UPF0297 family.

In Lactococcus lactis subsp. cremoris (strain SK11), this protein is UPF0297 protein LACR_0137.